A 318-amino-acid polypeptide reads, in one-letter code: Aspartate carbamoyltransferase catalytic subunit (318 aa).

Residues arginine 67 and threonine 68 each coordinate carbamoyl phosphate. Residue lysine 95 coordinates L-aspartate. Residues arginine 117, histidine 145, and glutamine 148 each contribute to the carbamoyl phosphate site. The L-aspartate site is built by arginine 178 and arginine 236. Residues glycine 277 and proline 278 each coordinate carbamoyl phosphate.

The protein belongs to the aspartate/ornithine carbamoyltransferase superfamily. ATCase family. As to quaternary structure, heterododecamer (2C3:3R2) of six catalytic PyrB chains organized as two trimers (C3), and six regulatory PyrI chains organized as three dimers (R2).

It carries out the reaction carbamoyl phosphate + L-aspartate = N-carbamoyl-L-aspartate + phosphate + H(+). It functions in the pathway pyrimidine metabolism; UMP biosynthesis via de novo pathway; (S)-dihydroorotate from bicarbonate: step 2/3. In terms of biological role, catalyzes the condensation of carbamoyl phosphate and aspartate to form carbamoyl aspartate and inorganic phosphate, the committed step in the de novo pyrimidine nucleotide biosynthesis pathway. The protein is Aspartate carbamoyltransferase catalytic subunit of Roseiflexus castenholzii (strain DSM 13941 / HLO8).